Here is a 307-residue protein sequence, read N- to C-terminus: Putative oxidoreductase YceM (307 aa).

Belongs to the Gfo/Idh/MocA family.

The sequence is that of Putative oxidoreductase YceM (yceM) from Escherichia coli (strain K12).